A 131-amino-acid chain; its full sequence is MKIYSAVFIGGALGACLRYGLNLWIHTGQFPAATWLENAAGSLLLGILTGFFMIGAKRPLLSAFLGTGFCGGFTTMSTFSKETVMLLQGQPSLALLYVAASLISGIIFALIGVFVGRRIAGIQQRKGLQEK.

4 consecutive transmembrane segments (helical) span residues 5–25 (SAVFIGGALGACLRYGLNLWI), 35–55 (WLENAAGSLLLGILTGFFMIG), 59–79 (PLLSAFLGTGFCGGFTTMSTF), and 95–115 (LLYVAASLISGIIFALIGVFV). Na(+)-binding residues include G71 and T74.

It belongs to the fluoride channel Fluc/FEX (TC 1.A.43) family.

The protein localises to the cell membrane. It carries out the reaction fluoride(in) = fluoride(out). Its activity is regulated as follows. Na(+) is not transported, but it plays an essential structural role and its presence is essential for fluoride channel function. Fluoride-specific ion channel. Important for reducing fluoride concentration in the cell, thus reducing its toxicity. This chain is Fluoride-specific ion channel FluC 2, found in Bacillus subtilis (strain 168).